The primary structure comprises 141 residues: Galactose-6-phosphate isomerase subunit LacA (141 aa).

This sequence belongs to the LacAB/RpiB family. In terms of assembly, heteromultimeric protein consisting of LacA and LacB.

The catalysed reaction is aldehydo-D-galactose 6-phosphate = keto-D-tagatose 6-phosphate. It functions in the pathway carbohydrate metabolism; D-galactose 6-phosphate degradation; D-tagatose 6-phosphate from D-galactose 6-phosphate: step 1/1. In Streptococcus agalactiae serotype Ia (strain ATCC 27591 / A909 / CDC SS700), this protein is Galactose-6-phosphate isomerase subunit LacA.